The following is a 520-amino-acid chain: General transcription factor 3C polypeptide 5 (520 aa).

The residue at position 2 (A2) is an N-acetylalanine. The tract at residues 466–520 (LFSNTGKADRGKEQLMFESGEEEEEEEEEEEEEEEDFKPSDGSENEMETEILDYV) is disordered. Composition is skewed to acidic residues over residues 484-501 (SGEEEEEEEEEEEEEEED) and 508-520 (SENEMETEILDYV).

It belongs to the TFIIIC subunit 5 family. In terms of assembly, part of the TFIIIC subcomplex TFIIIC2, consisting of six subunits, GTF3C1, GTF3C2, GTF3C3, GTF3C4, GTF3C5 and GTF3C6. Interacts with BRF1, GTF3C6 and TBP.

The protein resides in the nucleus. In terms of biological role, involved in RNA polymerase III-mediated transcription. Integral, tightly associated component of the DNA-binding TFIIIC2 subcomplex that directly binds tRNA and virus-associated RNA promoters. The sequence is that of General transcription factor 3C polypeptide 5 (Gtf3c5) from Mus musculus (Mouse).